The primary structure comprises 287 residues: MTFLDMLRAAERQNGSMLCVGLDPEPTRFPAHYSGDVSKIYDFCAAIVDATADLVMAFKPQIAYFAAHRAEPQLERLIAHMRRAAPHVPVILDAKRGDIGSTAEQYAKEAFERYGADAVTLSPFMGFDSLQPYLRYHGKGAFLLCRTSNPGGDDLQSQRLASVEGTPLLYEHIARLAQGPWNLNGQLGLVVGATYPAELERVRALAPTLPLLIPGVGAQGGDCAATVRAAWRAAPGTSGEALDTLAPIIVNSSRAILYASSGADFAQAARREALATRDLLQAARQPA.

The active-site Proton donor is the lysine 95.

Belongs to the OMP decarboxylase family. Type 2 subfamily.

The catalysed reaction is orotidine 5'-phosphate + H(+) = UMP + CO2. Its pathway is pyrimidine metabolism; UMP biosynthesis via de novo pathway; UMP from orotate: step 2/2. This chain is Orotidine 5'-phosphate decarboxylase, found in Albidiferax ferrireducens (strain ATCC BAA-621 / DSM 15236 / T118) (Rhodoferax ferrireducens).